Reading from the N-terminus, the 205-residue chain is MTERGLLIVLSGPSGVGKGTVREAVFKDPETSFDYSISMTTRLPREGEQDGVDYYFRSREVFEQAIKDGKMLEYAEYVGNYYGTPLEYVEEKLAAGVDIFLEIEVQGAMQVRKAMPEGIFIFLTPPDLSELKNRIIGRGTESMEVVEERMETAKKEIEMMASYDYAVVNDVVANAVQKIKGIVETEHLKTERVIHRYKKMLEGLQ.

The 180-residue stretch at 5–184 folds into the Guanylate kinase-like domain; that stretch reads GLLIVLSGPS…AVQKIKGIVE (180 aa). Residue 12 to 19 participates in ATP binding; sequence GPSGVGKG.

Belongs to the guanylate kinase family.

The protein resides in the cytoplasm. It carries out the reaction GMP + ATP = GDP + ADP. Essential for recycling GMP and indirectly, cGMP. The sequence is that of Guanylate kinase from Listeria monocytogenes serotype 4b (strain F2365).